Here is an 84-residue protein sequence, read N- to C-terminus: Large ribosomal subunit protein bL27 (84 aa).

Residues 1–21 (MAHKKGGGSTKNGRDSNPKYL) form a disordered region.

It belongs to the bacterial ribosomal protein bL27 family.

This chain is Large ribosomal subunit protein bL27, found in Chlorobium phaeovibrioides (strain DSM 265 / 1930) (Prosthecochloris vibrioformis (strain DSM 265)).